Consider the following 181-residue polypeptide: GTP cyclohydrolase 1 2 (181 aa).

It belongs to the GTP cyclohydrolase I family. Homomer.

It catalyses the reaction GTP + H2O = 7,8-dihydroneopterin 3'-triphosphate + formate + H(+). Its pathway is cofactor biosynthesis; 7,8-dihydroneopterin triphosphate biosynthesis; 7,8-dihydroneopterin triphosphate from GTP: step 1/1. The polypeptide is GTP cyclohydrolase 1 2 (folE2) (Pseudomonas aeruginosa (strain ATCC 15692 / DSM 22644 / CIP 104116 / JCM 14847 / LMG 12228 / 1C / PRS 101 / PAO1)).